The following is a 141-amino-acid chain: Keratin-associated protein 19-2 (141 aa).

Residues 5–135 (SGYSGGLGYG…CRRSSCCGGY (131 aa)) form a 48 X 2 AA repeats of G-[YCGS] region.

The protein belongs to the KRTAP type 19 family. In terms of assembly, interacts with hair keratins. As to expression, strong expression in narrowly defined pattern restricted to the lower and middle cortical regions of the hair shaft in both developing and cycling hair. During hair follicle regression (catagen), expression levels decrease until expression is no longer detectable in follicles at resting stage (telogen).

Its function is as follows. In the hair cortex, hair keratin intermediate filaments are embedded in an interfilamentous matrix, consisting of hair keratin-associated proteins (KRTAP), which are essential for the formation of a rigid and resistant hair shaft through their extensive disulfide bond cross-linking with abundant cysteine residues of hair keratins. The matrix proteins include the high-sulfur and high-glycine-tyrosine keratins. This chain is Keratin-associated protein 19-2 (Krtap19-2), found in Mus musculus (Mouse).